Here is a 227-residue protein sequence, read N- to C-terminus: NAD(P)H-quinone oxidoreductase subunit K, chloroplastic (227 aa).

[4Fe-4S] cluster contacts are provided by C43, C44, C108, and C139.

This sequence belongs to the complex I 20 kDa subunit family. As to quaternary structure, NDH is composed of at least 16 different subunits, 5 of which are encoded in the nucleus. It depends on [4Fe-4S] cluster as a cofactor.

The protein resides in the plastid. The protein localises to the chloroplast thylakoid membrane. The catalysed reaction is a plastoquinone + NADH + (n+1) H(+)(in) = a plastoquinol + NAD(+) + n H(+)(out). It catalyses the reaction a plastoquinone + NADPH + (n+1) H(+)(in) = a plastoquinol + NADP(+) + n H(+)(out). NDH shuttles electrons from NAD(P)H:plastoquinone, via FMN and iron-sulfur (Fe-S) centers, to quinones in the photosynthetic chain and possibly in a chloroplast respiratory chain. The immediate electron acceptor for the enzyme in this species is believed to be plastoquinone. Couples the redox reaction to proton translocation, and thus conserves the redox energy in a proton gradient. This is NAD(P)H-quinone oxidoreductase subunit K, chloroplastic from Spinacia oleracea (Spinach).